The primary structure comprises 158 residues: Proteinase inhibitor type-2 (158 aa).

A signal peptide spans 1-24 (MAIHKEVSFLAYLLVLGMLLFVSA). 2 repeat units span residues 29–86 (DAKA…HPKN) and 87–146 (PKAC…IEPK). 8 disulfide bridges follow: Cys-33–Cys-121, Cys-37–Cys-117, Cys-45–Cys-127, Cys-57–Cys-94, Cys-60–Cys-78, Cys-61–Cys-90, Cys-67–Cys-103, and Cys-120–Cys-138.

It belongs to the protease inhibitor I20 (potato type II proteinase inhibitor) family.

The protein is Proteinase inhibitor type-2 of Solanum tuberosum (Potato).